The chain runs to 445 residues: Probable glycine dehydrogenase (decarboxylating) subunit 1 (445 aa).

The protein belongs to the GcvP family. N-terminal subunit subfamily. As to quaternary structure, the glycine cleavage system is composed of four proteins: P, T, L and H. In this organism, the P 'protein' is a heterodimer of two subunits.

The catalysed reaction is N(6)-[(R)-lipoyl]-L-lysyl-[glycine-cleavage complex H protein] + glycine + H(+) = N(6)-[(R)-S(8)-aminomethyldihydrolipoyl]-L-lysyl-[glycine-cleavage complex H protein] + CO2. In terms of biological role, the glycine cleavage system catalyzes the degradation of glycine. The P protein binds the alpha-amino group of glycine through its pyridoxal phosphate cofactor; CO(2) is released and the remaining methylamine moiety is then transferred to the lipoamide cofactor of the H protein. This is Probable glycine dehydrogenase (decarboxylating) subunit 1 from Anaeromyxobacter dehalogenans (strain 2CP-C).